Here is a 112-residue protein sequence, read N- to C-terminus: UPF0060 membrane protein SAV_4756 (112 aa).

4 helical membrane passes run 8-28 (ALFV…WQGV), 33-53 (GWLW…VATL), 62-82 (ILAA…MVAD), and 91-111 (VTGA…PRGG).

The protein belongs to the UPF0060 family.

It localises to the cell membrane. The sequence is that of UPF0060 membrane protein SAV_4756 from Streptomyces avermitilis (strain ATCC 31267 / DSM 46492 / JCM 5070 / NBRC 14893 / NCIMB 12804 / NRRL 8165 / MA-4680).